The following is a 552-amino-acid chain: Cytochrome P450 monooxyhenase eriI (552 aa).

A helical membrane pass occupies residues 9 to 26 (FALKASAAVAVLLLAAWV). N-linked (GlcNAc...) asparagine glycosylation is found at Asn50 and Asn447. Cys495 contributes to the heme binding site.

The protein belongs to the cytochrome P450 family. Requires heme as cofactor.

The protein localises to the membrane. It carries out the reaction (-)-cyatha-3,12-diene + reduced [NADPH--hemoprotein reductase] + O2 = erinacol + oxidized [NADPH--hemoprotein reductase] + H2O + H(+). The protein operates within secondary metabolite biosynthesis. Cytochrome P450 monooxygenase; part of the gene cluster that mediates the biosynthesis of erinacines, cyathane-xylosides that show unique biological activities, including leishmanicidal activity, stimulating activity for nerve growth-factor synthesis, and agonistic activity toward the kappa opioid receptor. Within the pathway, eriI hydroxylates cyatha-3,12-diene at C-14 of the seven-membered ring to yield erinacol. The first step of the erinacines biosynthesis pathway is catalyzed by the geranylgeranyl diphosphate (GGPP) synthase eriE via conversion of farnesyl pyrophosphate and isopentyl pyrophosphate into geranylgeranyl pyrophosphate (GGPP). GGPP is then substrate of the diterpene cyclase eriG for the production of cyatha-3,12-diene. The cytochrome P450 monooxygenase eriI then hydroxylates cyatha-3,12-diene at C-14 of the seven-membered ring to produce erinacol, which is further hydroxylated at C-15 by the cytochrome P450 monooxygenase eriC to yield cyathadiol. The cytochrome P450 monooxygenase eriA then catalyzes C-11 hydroxylation in the presence of the short chain dehydrogenase/reductase (SDR) eriH, which leads to the production of cyathatriol. The acetyltransferase eriL converts cyathatriol into 11-O-acetyl-cyathatriol. The SDR eriH catalyzes further oxidation of 11-O-acetyl-cyathatriol into 1-O-acetylcyathin A3. Finally, the glycosyl transferase eriJ tranfers xylose from UDP-xylose onto C-14 of 11-O-acetyl-cyathatriol to form eracine Q. EriJ is also able to convert 11-O-acetyl-cyathatriol to eracine Q2 by using UDP-D-glucose as cosubstrate, but at a lower rate. In terms of biological role, cytochrome P450 monooxygenase; part of the gene cluster that mediates the biosynthesis of erinacines, cyathane-xylosides that show unique biological activities, including leishmanicidal activity, stimulating activity for nerve growth-factor synthesis, and agonistic activity toward the kappa opioid receptor. The geranylgeranyl diphosphate (GGPP) synthase eriE catalyzes the first step in erinacines biosynthesis via conversion of farnesyl pyrophosphate and isopentyl pyrophosphate into geranylgeranyl pyrophosphate (GGPP). GGPP is then substrate of the diterpene cyclase eriG for the production of cyatha-3,12-diene. EriG is unable to use geranyl diphosphate (GPP) or farnesyl diphosphate (FPP) as substrates. The cytochrome P450 monooxygenase eriI then hydroxylates cyatha-3,12-diene at C-14 of the seven-membered ring to produce erinacol, which is further hydroxylated at C-15 by the cytochrome P450 monooxygenase eriC to yield cyathadiol. The cytochrome P450 monooxygenase eriA then catalyzes C-11 hydroxylation in the presence of the short chain dehydrogenase/reductase (SDR) eriH, which leads to the production of cyathatriol. The acetyltransferase eriL converts cyathatriol into 11-O-acetyl-cyathatriol. The SDR eriH catalyzes further oxidation of 11-O-acetyl-cyathatriol into 1-O-acetylcyathin A3. Finally, the glycosyl transferase eriJ tranfers xylose from UDP-xylose onto C-14 of 11-O-acetyl-cyathatriol to form eracine Q. EriJ is also able to convert 11-O-acetyl-cyathatriol to eracine Q2 by using UDP-D-glucose as cosubstrate, but at a lower rate. In the absence of eriL and eriJ, the SDR eriH is able to convert cyathatriol to cyathin A3; this is likely a switching mechanism in the biosynthesis of cyathins (C-14 ketogroup)and erinacines (C-14 glycosylated group). The roles of the SDR eriB, the polyprenyl transferase eriF and the dehydrogenase eriK have still to be identified. The sequence is that of Cytochrome P450 monooxyhenase eriI from Hericium erinaceus (Lion's mane mushroom).